Consider the following 821-residue polypeptide: Lon protease (821 aa).

The region spanning 18 to 216 (LPLMSLREVV…KVYELLQGEI (199 aa)) is the Lon N-terminal domain. 368-375 (GPPGVGKT) serves as a coordination point for ATP. One can recognise a Lon proteolytic domain in the interval 606–787 (TSQVGVCTGL…DEVLPQALMA (182 aa)). Active-site residues include serine 693 and lysine 736.

Belongs to the peptidase S16 family. In terms of assembly, homohexamer. Organized in a ring with a central cavity.

It localises to the cytoplasm. The enzyme catalyses Hydrolysis of proteins in presence of ATP.. Functionally, ATP-dependent serine protease that mediates the selective degradation of mutant and abnormal proteins as well as certain short-lived regulatory proteins. Required for cellular homeostasis and for survival from DNA damage and developmental changes induced by stress. Degrades polypeptides processively to yield small peptide fragments that are 5 to 10 amino acids long. Binds to DNA in a double-stranded, site-specific manner. The sequence is that of Lon protease from Nitratidesulfovibrio vulgaris (strain ATCC 29579 / DSM 644 / CCUG 34227 / NCIMB 8303 / VKM B-1760 / Hildenborough) (Desulfovibrio vulgaris).